The chain runs to 330 residues: Solute carrier family 25 member 16 (330 aa).

Solcar repeat units follow at residues Phe32–Leu118, Ser126–Val214, and Leu236–Phe326. 6 consecutive transmembrane segments (helical) span residues Tyr33 to Val52, Gly95 to Phe112, Leu132 to Leu149, Gly189 to Gly209, Leu242 to Thr262, and Gly297 to Phe317.

This sequence belongs to the mitochondrial carrier (TC 2.A.29) family. In terms of tissue distribution, mostly in thyroid, liver, lung, kidney and to a lesser extent in heart and skeletal muscle.

The protein resides in the mitochondrion inner membrane. In terms of biological role, may be involved in the transport of coenzyme A in the mitochondrial matrix. Very little is known about the physiological function of this carrier. The polypeptide is Solute carrier family 25 member 16 (SLC25A16) (Bos taurus (Bovine)).